Here is a 431-residue protein sequence, read N- to C-terminus: Adenylosuccinate synthetase (431 aa).

Residues 13–19 (GDEGKGK) and 41–43 (GHT) contribute to the GTP site. Residue Asp14 is the Proton acceptor of the active site. Mg(2+)-binding residues include Asp14 and Gly41. Residues 14-17 (DEGK), 39-42 (NAGH), Thr130, Arg144, Gln225, Thr240, and Arg304 contribute to the IMP site. The active-site Proton donor is the His42. Position 300-306 (300-306 (ATTGRKR)) interacts with substrate. GTP contacts are provided by residues Arg306, 332–334 (KLD), and 415–417 (STG).

It belongs to the adenylosuccinate synthetase family. In terms of assembly, homodimer. Mg(2+) serves as cofactor.

The protein resides in the cytoplasm. It catalyses the reaction IMP + L-aspartate + GTP = N(6)-(1,2-dicarboxyethyl)-AMP + GDP + phosphate + 2 H(+). Its pathway is purine metabolism; AMP biosynthesis via de novo pathway; AMP from IMP: step 1/2. Functionally, plays an important role in the de novo pathway of purine nucleotide biosynthesis. Catalyzes the first committed step in the biosynthesis of AMP from IMP. This chain is Adenylosuccinate synthetase, found in Shewanella amazonensis (strain ATCC BAA-1098 / SB2B).